The primary structure comprises 958 residues: Translation initiation factor IF-2 (958 aa).

Disordered stretches follow at residues alanine 67 to proline 95 and proline 111 to glycine 355. A compositionally biased stretch (pro residues) spans alanine 75–proline 95. Residues proline 140–proline 161 show a composition bias toward low complexity. A compositionally biased stretch (basic and acidic residues) spans arginine 195–glycine 206. Residues arginine 209–alanine 221 are compositionally biased toward low complexity. A compositionally biased stretch (pro residues) spans proline 228–proline 241. Residues glycine 268–arginine 325 show a composition bias toward gly residues. Over residues glycine 326 to lysine 335 the composition is skewed to basic residues. In terms of domain architecture, tr-type G spans alanine 450–leucine 621. Residues glycine 459–threonine 466 are G1. Position 459–466 (glycine 459–threonine 466) interacts with GTP. Residues glycine 484 to histidine 488 form a G2 region. The tract at residues aspartate 509–glycine 512 is G3. GTP contacts are provided by residues aspartate 509–histidine 513 and asparagine 563–aspartate 566. Residues asparagine 563–aspartate 566 form a G4 region. The interval serine 599–arginine 601 is G5.

The protein belongs to the TRAFAC class translation factor GTPase superfamily. Classic translation factor GTPase family. IF-2 subfamily.

The protein resides in the cytoplasm. One of the essential components for the initiation of protein synthesis. Protects formylmethionyl-tRNA from spontaneous hydrolysis and promotes its binding to the 30S ribosomal subunits. Also involved in the hydrolysis of GTP during the formation of the 70S ribosomal complex. This is Translation initiation factor IF-2 from Paenarthrobacter aurescens (strain TC1).